Consider the following 70-residue polypeptide: Large ribosomal subunit protein bL31 (70 aa).

Positions 16, 18, 37, and 40 each coordinate Zn(2+).

It belongs to the bacterial ribosomal protein bL31 family. Type A subfamily. As to quaternary structure, part of the 50S ribosomal subunit. The cofactor is Zn(2+).

In terms of biological role, binds the 23S rRNA. This chain is Large ribosomal subunit protein bL31, found in Shewanella oneidensis (strain ATCC 700550 / JCM 31522 / CIP 106686 / LMG 19005 / NCIMB 14063 / MR-1).